The sequence spans 1210 residues: A disintegrin and metalloproteinase with thrombospondin motifs 19 (1210 aa).

An N-terminal signal peptide occupies residues 1-30; the sequence is MGPEMRLTRICCCCCLLYQLGFLSHGTTSG. Positions 31–319 are excised as a propeptide; that stretch reads LQLTPDLEEW…KIADNRREKR (289 aa). Asparagine 54 carries N-linked (GlcNAc...) asparagine glycosylation. The disordered stretch occupies residues 55–166; the sequence is ATGLSGGSSD…PAQQEEPSAE (112 aa). A compositionally biased stretch (gly residues) spans 69-78; that stretch reads RSSGGGGRGQ. The span at 84-98 shows a compositional bias: basic and acidic residues; sequence REVRSVARAPQEEAT. A compositionally biased stretch (acidic residues) spans 113–122; the sequence is GAEDEEELES. Over residues 130 to 139 the composition is skewed to polar residues; that stretch reads SGDTALSSGT. Positions 143-158 are enriched in pro residues; sequence WQPPLPPQRPSSPPPA. The N-linked (GlcNAc...) asparagine glycan is linked to asparagine 263. Residues 295-302 carry the Cysteine switch motif; that stretch reads HHCGVISD. Cysteine 297 provides a ligand contact to Zn(2+). The region spanning 328–548 is the Peptidase M12B domain; sequence YNIETVVVAD…KASSCLLHTD (221 aa). 11 cysteine pairs are disulfide-bonded: cysteine 404–cysteine 469, cysteine 444–cysteine 451, cysteine 463–cysteine 543, cysteine 502–cysteine 527, cysteine 572–cysteine 596, cysteine 583–cysteine 604, cysteine 591–cysteine 623, cysteine 617–cysteine 628, cysteine 648–cysteine 683, cysteine 652–cysteine 688, and cysteine 663–cysteine 673. Residue histidine 485 participates in Zn(2+) binding. Glutamate 486 is a catalytic residue. Positions 489 and 495 each coordinate Zn(2+). A Disintegrin domain is found at 549-636; sequence PQSLSSVLVP…ECTRRTPAPE (88 aa). The TSP type-1 1 domain occupies 637–689; sequence HLAGEWSPWSSCSRSCSSGVSSRERKCPGLGSEARDCNGPRKQYRICENPPCP. The spacer stretch occupies residues 794 to 917; it reads VIKGDFNHTR…PDNQSSKEPG (124 aa). 5 N-linked (GlcNAc...) asparagine glycosylation sites follow: asparagine 800, asparagine 910, asparagine 931, asparagine 952, and asparagine 1012. TSP type-1 domains follow at residues 918 to 978, 979 to 1040, 1042 to 1086, and 1090 to 1147; these read PLFM…NEQP, CQTR…QDCM, VWEA…EDCE, and KCYV…QPCN. Disulfide bonds link cysteine 991–cysteine 1034, cysteine 995–cysteine 1039, and cysteine 1006–cysteine 1023. Positions 1163–1202 constitute a PLAC domain; that stretch reads LTFKCLGDQWPVYCRVIREKNLCQDMRWYQRCCETCRDFY.

It depends on Zn(2+) as a cofactor. The precursor is cleaved by a furin endopeptidase. In terms of processing, glycosylated. Can be O-fucosylated by POFUT2 on a serine or a threonine residue found within the consensus sequence C1-X(2)-(S/T)-C2-G of the TSP type-1 repeat domains where C1 and C2 are the first and second cysteine residue of the repeat, respectively. Fucosylated repeats can then be further glycosylated by the addition of a beta-1,3-glucose residue by the glucosyltransferase, B3GALTL. Fucosylation mediates the efficient secretion of ADAMTS family members. Can also be C-glycosylated with one or two mannose molecules on tryptophan residues within the consensus sequence W-X-X-W of the TPRs, and N-glycosylated. These other glycosylations can also facilitate secretion. In terms of tissue distribution, expressed predominantly in fetal ovary, low levels of expression is also detected in kidney, heart, skeletal muscle, lung and testis.

It localises to the secreted. Its subcellular location is the extracellular space. It is found in the extracellular matrix. In Mus musculus (Mouse), this protein is A disintegrin and metalloproteinase with thrombospondin motifs 19 (Adamts19).